Consider the following 305-residue polypeptide: Probable cell division protein WhiA (305 aa).

The segment at residues 272 to 305 (SIQQLADSLTVPITKSGVNHRLRKINKIADELTD) is a DNA-binding region (H-T-H motif).

It belongs to the WhiA family.

Functionally, involved in cell division and chromosome segregation. In Streptococcus suis (strain 98HAH33), this protein is Probable cell division protein WhiA.